Consider the following 399-residue polypeptide: Probable 2,3-bisphosphoglycerate-independent phosphoglycerate mutase (399 aa).

It belongs to the BPG-independent phosphoglycerate mutase family. A-PGAM subfamily.

The enzyme catalyses (2R)-2-phosphoglycerate = (2R)-3-phosphoglycerate. Its pathway is carbohydrate degradation; glycolysis; pyruvate from D-glyceraldehyde 3-phosphate: step 3/5. Its function is as follows. Catalyzes the interconversion of 2-phosphoglycerate and 3-phosphoglycerate. This Geobacter sulfurreducens (strain ATCC 51573 / DSM 12127 / PCA) protein is Probable 2,3-bisphosphoglycerate-independent phosphoglycerate mutase.